We begin with the raw amino-acid sequence, 282 residues long: Shikimate dehydrogenase (NADP(+)) (282 aa).

Shikimate contacts are provided by residues 16–18 (SLS) and Thr63. Lys67 functions as the Proton acceptor in the catalytic mechanism. Positions 88 and 103 each coordinate shikimate. Residues 128–132 (GAGGA) and Leu219 contribute to the NADP(+) site. Tyr221 contacts shikimate. Gly243 contributes to the NADP(+) binding site.

It belongs to the shikimate dehydrogenase family. As to quaternary structure, homodimer.

It carries out the reaction shikimate + NADP(+) = 3-dehydroshikimate + NADPH + H(+). The protein operates within metabolic intermediate biosynthesis; chorismate biosynthesis; chorismate from D-erythrose 4-phosphate and phosphoenolpyruvate: step 4/7. Its function is as follows. Involved in the biosynthesis of the chorismate, which leads to the biosynthesis of aromatic amino acids. Catalyzes the reversible NADPH linked reduction of 3-dehydroshikimate (DHSA) to yield shikimate (SA). In Xylella fastidiosa (strain M12), this protein is Shikimate dehydrogenase (NADP(+)).